The sequence spans 557 residues: Dihydroxy-acid dehydratase (557 aa).

Residue Cys49 participates in [2Fe-2S] cluster binding. Residue Asp81 participates in Mg(2+) binding. Residue Cys122 participates in [2Fe-2S] cluster binding. Residues Asp123 and Lys124 each coordinate Mg(2+). Lys124 carries the post-translational modification N6-carboxylysine. Cys194 serves as a coordination point for [2Fe-2S] cluster. Glu446 contacts Mg(2+). The active-site Proton acceptor is Ser472.

It belongs to the IlvD/Edd family. As to quaternary structure, homodimer. The cofactor is [2Fe-2S] cluster. Mg(2+) serves as cofactor.

It catalyses the reaction (2R)-2,3-dihydroxy-3-methylbutanoate = 3-methyl-2-oxobutanoate + H2O. It carries out the reaction (2R,3R)-2,3-dihydroxy-3-methylpentanoate = (S)-3-methyl-2-oxopentanoate + H2O. The protein operates within amino-acid biosynthesis; L-isoleucine biosynthesis; L-isoleucine from 2-oxobutanoate: step 3/4. It functions in the pathway amino-acid biosynthesis; L-valine biosynthesis; L-valine from pyruvate: step 3/4. In terms of biological role, functions in the biosynthesis of branched-chain amino acids. Catalyzes the dehydration of (2R,3R)-2,3-dihydroxy-3-methylpentanoate (2,3-dihydroxy-3-methylvalerate) into 2-oxo-3-methylpentanoate (2-oxo-3-methylvalerate) and of (2R)-2,3-dihydroxy-3-methylbutanoate (2,3-dihydroxyisovalerate) into 2-oxo-3-methylbutanoate (2-oxoisovalerate), the penultimate precursor to L-isoleucine and L-valine, respectively. The chain is Dihydroxy-acid dehydratase from Prochlorococcus marinus (strain MIT 9215).